Reading from the N-terminus, the 266-residue chain is Calpain small subunit 1 (266 aa).

The residue at position 1 (Met1) is an N-acetylmethionine. Phosphoserine is present on Ser6. Residues 94 to 128 enclose the EF-hand 1; atypical domain; the sequence is EEVRQFRRLFAQLAGDDMEVSATELMNILNKVVTR. 10 residues coordinate Ca(2+): Ala107, Asp110, Glu112, Glu117, Asp135, Asp150, Asp152, Thr154, Lys156, and Glu161. EF-hand domains lie at 137–170, 167–202, 203–231, and 232–266; these read FGID…NNIK, NNIK…AGFH, LNEH…ISCL, and VRLD…TMYS. Position 177 is an N6-acetyllysine (Lys177). 6 residues coordinate Ca(2+): Asp180, Asp182, Ser184, Thr186, Glu191, and Asp223.

In terms of assembly, homodimer or heterodimer of a large (catalytic) and a small (regulatory) subunit. In presence of calcium, the heterodimer dissociates.

It is found in the cytoplasm. Its subcellular location is the cell membrane. Regulatory subunit of the calcium-regulated non-lysosomal thiol-protease which catalyzes limited proteolysis of substrates involved in cytoskeletal remodeling and signal transduction. Essential for embryonic development. The sequence is that of Calpain small subunit 1 (CAPNS1) from Sus scrofa (Pig).